We begin with the raw amino-acid sequence, 432 residues long: Glutamyl-tRNA reductase (432 aa).

Substrate is bound by residues T55–R58, S114, E119–Q121, and Q125. The Nucleophile role is filled by C56. Position 194 to 199 (G194 to I199) interacts with NADP(+).

The protein belongs to the glutamyl-tRNA reductase family. Homodimer.

The catalysed reaction is (S)-4-amino-5-oxopentanoate + tRNA(Glu) + NADP(+) = L-glutamyl-tRNA(Glu) + NADPH + H(+). It participates in porphyrin-containing compound metabolism; protoporphyrin-IX biosynthesis; 5-aminolevulinate from L-glutamyl-tRNA(Glu): step 1/2. In terms of biological role, catalyzes the NADPH-dependent reduction of glutamyl-tRNA(Glu) to glutamate 1-semialdehyde (GSA). This is Glutamyl-tRNA reductase from Burkholderia ambifaria (strain ATCC BAA-244 / DSM 16087 / CCUG 44356 / LMG 19182 / AMMD) (Burkholderia cepacia (strain AMMD)).